Consider the following 173-residue polypeptide: Cytochrome c-type biogenesis protein CcmE (173 aa).

Residues 1-8 (MNPRRKSR) lie on the Cytoplasmic side of the membrane. The helical; Signal-anchor for type II membrane protein transmembrane segment at 9–29 (FKLVIFVVLGIAIASGLMLYA) threads the bilayer. Residues 30–173 (LRQNIDLFYT…RDRQEKEGAK (144 aa)) are Periplasmic-facing. Heme contacts are provided by H131 and Y135. The tract at residues 139–173 (ELGEKMQKVHKPMGIKAADLKGESERDRQEKEGAK) is disordered. Over residues 156–173 (ADLKGESERDRQEKEGAK) the composition is skewed to basic and acidic residues.

This sequence belongs to the CcmE/CycJ family.

The protein localises to the cell inner membrane. Functionally, heme chaperone required for the biogenesis of c-type cytochromes. Transiently binds heme delivered by CcmC and transfers the heme to apo-cytochromes in a process facilitated by CcmF and CcmH. The sequence is that of Cytochrome c-type biogenesis protein CcmE from Haemophilus influenzae (strain 86-028NP).